Here is a 519-residue protein sequence, read N- to C-terminus: MSERIEIPAEKLHEEMLKLRQGKHMDFLRSLTGMDWGEEGLGVVYHLEDTNTRENIVVSTRTTNREKPELPSVSDIWKGAEFNEREVYDYYGIRFIGHPDMRRLFLRDDWVGYPLRKDYDESLNPLRMTNEEPVDTTQYIEVQHDGSVIEKRETIFDEDEYIINIGPQHPATHGVLRFRVSLEGEIIKKLDVHCGYIHRGIEKMCESLTYPQTLALTDRLDYLGAHQNRHALCMCIEQAMGVEVSERVQYIRTIMDELQRIDSHLLFFSCLCMDMGALTAFFYGFRDREKILDIFEATTGGRLIQNYNTIGGVQADIAPDFVQKVKEFIAYLRPMLKEYHEVFTGNVIAQERLKGVGVLSREDAISFGATGGTGRASGWACDVRKRHPYAMYGKVDFKEIVHTEGDCFARYMVRMEEILESMDIIEQLIDNIPEGNYQEKMKPIIRVPEGNYYAAVEGSRGEFGVYLESRGDKFPYRMKFRATGLPLVSAMETMCRNAKIADLIAIGGTVDYVVPDIDR.

The NADH dehydrogenase I subunit C stretch occupies residues 1 to 138 (MSERIEIPAE…TNEEPVDTTQ (138 aa)). The interval 159–519 (DEYIINIGPQ…VDYVVPDIDR (361 aa)) is NADH dehydrogenase I subunit D.

This sequence in the N-terminal section; belongs to the complex I 30 kDa subunit family. The protein in the C-terminal section; belongs to the complex I 49 kDa subunit family. NDH-1 is composed of 13 different subunits. Subunits NuoB, CD, E, F, and G constitute the peripheral sector of the complex.

Its subcellular location is the cell inner membrane. It carries out the reaction a quinone + NADH + 5 H(+)(in) = a quinol + NAD(+) + 4 H(+)(out). In terms of biological role, NDH-1 shuttles electrons from NADH, via FMN and iron-sulfur (Fe-S) centers, to quinones in the respiratory chain. The immediate electron acceptor for the enzyme in this species is believed to be a menaquinone. Couples the redox reaction to proton translocation (for every two electrons transferred, four hydrogen ions are translocated across the cytoplasmic membrane), and thus conserves the redox energy in a proton gradient. The polypeptide is NADH-quinone oxidoreductase subunit C/D (Phocaeicola vulgatus (strain ATCC 8482 / DSM 1447 / JCM 5826 / CCUG 4940 / NBRC 14291 / NCTC 11154) (Bacteroides vulgatus)).